A 129-amino-acid polypeptide reads, in one-letter code: Histone H2A-III (129 aa).

It belongs to the histone H2A family. In terms of assembly, the nucleosome is a histone octamer containing two molecules each of H2A, H2B, H3 and H4 assembled in one H3-H4 heterotetramer and two H2A-H2B heterodimers. The octamer wraps approximately 147 bp of DNA.

It is found in the nucleus. It localises to the chromosome. Functionally, core component of nucleosome. Nucleosomes wrap and compact DNA into chromatin, limiting DNA accessibility to the cellular machineries which require DNA as a template. Histones thereby play a central role in transcription regulation, DNA repair, DNA replication and chromosomal stability. DNA accessibility is regulated via a complex set of post-translational modifications of histones, also called histone code, and nucleosome remodeling. In Volvox carteri (Green alga), this protein is Histone H2A-III.